The sequence spans 173 residues: Alpha-crystallin A chain (173 aa).

Methionine 1 carries the post-translational modification N-acetylmethionine. Residues 1 to 63 form a required for complex formation with BFSP1 and BFSP2 region; that stretch reads MDIAIQHPWF…RSVLDSGVSE (63 aa). Glutamine 6 is subject to Deamidated glutamine; partial. At serine 45 the chain carries Phosphoserine. Glutamine 50 carries the deamidated glutamine; partial modification. The sHSP domain occupies 52 to 162; the sequence is LFRSVLDSGV…GHSERAIPVS (111 aa). N6-acetyllysine is present on lysine 70. A Deamidated glutamine; partial modification is found at glutamine 90. Lysine 99 is subject to N6-acetyllysine. Position 100 (histidine 100) interacts with Zn(2+). A Deamidated asparagine; partial modification is found at asparagine 101. Positions 102 and 107 each coordinate Zn(2+). Serine 122 bears the Phosphoserine mark. Position 123 is a deamidated asparagine; partial (asparagine 123). Residues 144–173 form a disordered region; the sequence is PKIPSGMDAGHSERAIPVSREEKPSSAPSS. Residues 153–167 show a composition bias toward basic and acidic residues; that stretch reads GHSERAIPVSREEKP. Histidine 154 is a binding site for Zn(2+). Residue serine 162 is glycosylated (O-linked (GlcNAc) serine).

The protein belongs to the small heat shock protein (HSP20) family. Heteromer composed of three CRYAA and one CRYAB subunits. Inter-subunit bridging via zinc ions enhances stability, which is crucial as there is no protein turn over in the lens. Can also form homodimers and homotetramers (dimers of dimers) which serve as the building blocks of homooligomers. Within homooligomers, the zinc-binding motif is created from residues of 3 different molecules. His-100 and Glu-102 from one molecule are ligands of the zinc ion, and His-107 and His-154 residues from additional molecules complete the site with tetrahedral coordination geometry. Part of a complex required for lens intermediate filament formation composed of BFSP1, BFSP2 and CRYAA. Post-translationally, acetylation at Lys-70 may increase chaperone activity. Undergoes age-dependent proteolytical cleavage at the C-terminus.

The protein localises to the cytoplasm. Its subcellular location is the nucleus. Contributes to the transparency and refractive index of the lens. Acts as a chaperone, preventing aggregation of various proteins under a wide range of stress conditions. Required for the correct formation of lens intermediate filaments as part of a complex composed of BFSP1, BFSP2 and CRYAA. This chain is Alpha-crystallin A chain (CRYAA), found in Ceratotherium simum (White rhinoceros).